Here is a 333-residue protein sequence, read N- to C-terminus: tRNA N6-adenosine threonylcarbamoyltransferase (333 aa).

Residues His-111 and His-115 each contribute to the Fe cation site. Substrate contacts are provided by residues 134-138 (LVSGG), Asp-167, Gly-180, and Asn-272. Asp-300 serves as a coordination point for Fe cation.

Belongs to the KAE1 / TsaD family. Fe(2+) serves as cofactor.

Its subcellular location is the cytoplasm. The enzyme catalyses L-threonylcarbamoyladenylate + adenosine(37) in tRNA = N(6)-L-threonylcarbamoyladenosine(37) in tRNA + AMP + H(+). Functionally, required for the formation of a threonylcarbamoyl group on adenosine at position 37 (t(6)A37) in tRNAs that read codons beginning with adenine. Is involved in the transfer of the threonylcarbamoyl moiety of threonylcarbamoyl-AMP (TC-AMP) to the N6 group of A37, together with TsaE and TsaB. TsaD likely plays a direct catalytic role in this reaction. This is tRNA N6-adenosine threonylcarbamoyltransferase from Legionella pneumophila (strain Paris).